A 617-amino-acid polypeptide reads, in one-letter code: Regulatory solute carrier protein family 1 member 1 (617 aa).

The segment covering 1-22 has biased composition (polar residues); sequence MSSLPTSDGFNHPARSSGQSPD. 3 disordered regions span residues 1 to 106, 155 to 181, and 217 to 237; these read MSSL…EITV, ENQN…VAQQ, and KGNG…IPSS. Basic and acidic residues-rich tracts occupy residues 43 to 52 and 66 to 83; these read SDSDRIEPKA and SEKK…HASS. 2 stretches are compositionally biased toward polar residues: residues 89–103 and 155–165; these read TDQS…SSEE and ENQNLSQVSDP. The tract at residues 410 to 412 is involved in post-transcriptional down-regulation of SLC5A1; sequence QCP. Positions 571 to 611 constitute a UBA domain; the sequence is IFPATDIDRILRAGFTLQEALGALHRVGGNADLALLVLLAK.

In terms of assembly, interacts with YRDC. Expressed in small intestine, kidney and brain.

It is found in the cell membrane. Its subcellular location is the nucleus. The protein localises to the golgi apparatus. It localises to the trans-Golgi network. Functionally, mediates transcriptional and post-transcriptional regulation of SLC5A1. Inhibits a dynamin and PKC-dependent exocytotic pathway of SLC5A1. Also involved in transcriptional regulation of SLC22A2. Exhibits glucose-dependent, short-term inhibition of SLC5A1 and SLC22A2 by inhibiting the release of vesicles from the trans-Golgi network. This is Regulatory solute carrier protein family 1 member 1 (RSC1A1) from Homo sapiens (Human).